A 35-amino-acid chain; its full sequence is Photosystem II reaction center protein M (35 aa).

A helical membrane pass occupies residues 5 to 25 (IFGLTATALFIIIPTSFLLIL).

This sequence belongs to the PsbM family. PSII is composed of 1 copy each of membrane proteins PsbA, PsbB, PsbC, PsbD, PsbE, PsbF, PsbH, PsbI, PsbJ, PsbK, PsbL, PsbM, PsbT, PsbX, PsbY, PsbZ, Psb30/Ycf12, at least 3 peripheral proteins of the oxygen-evolving complex and a large number of cofactors. It forms dimeric complexes.

The protein localises to the plastid. Its subcellular location is the chloroplast thylakoid membrane. One of the components of the core complex of photosystem II (PSII). PSII is a light-driven water:plastoquinone oxidoreductase that uses light energy to abstract electrons from H(2)O, generating O(2) and a proton gradient subsequently used for ATP formation. It consists of a core antenna complex that captures photons, and an electron transfer chain that converts photonic excitation into a charge separation. This subunit is found at the monomer-monomer interface. The polypeptide is Photosystem II reaction center protein M (Tetradesmus obliquus (Green alga)).